The chain runs to 133 residues: Hemoglobin subunit alpha-2 (133 aa).

Residues 1–133 enclose the Globin domain; it reads NVKAVWEHVK…VKNVLTSRYR (133 aa). His-50 contacts O2. Heme b is bound at residue His-79.

Belongs to the globin family. Minor hemoglobin is a heterotetramer of two alpha-2 chains and two beta-2 chains. Red blood cells.

Involved in oxygen transport from the lung to the various peripheral tissues. This is Hemoglobin subunit alpha-2 from Pleurodeles waltl (Iberian ribbed newt).